We begin with the raw amino-acid sequence, 274 residues long: Putative hydro-lyase SAV_6940 (274 aa).

Belongs to the D-glutamate cyclase family.

The polypeptide is Putative hydro-lyase SAV_6940 (Streptomyces avermitilis (strain ATCC 31267 / DSM 46492 / JCM 5070 / NBRC 14893 / NCIMB 12804 / NRRL 8165 / MA-4680)).